Consider the following 433-residue polypeptide: PBSX phage terminase large subunit (433 aa).

The protein to B.subtilis YqaT and phage SPP1 terminase large subunit. Dimer of a small and a large subunit.

In terms of biological role, functions as a terminase. The polypeptide is PBSX phage terminase large subunit (xtmB) (Bacillus subtilis (strain 168)).